The sequence spans 280 residues: UPF0494 membrane protein SPAC212.01c (280 aa).

The next 4 helical transmembrane spans lie at 107–127 (WPLLIIWSIIIVFAVDKKFEV), 144–164 (IWVPIAIYVCLLVLMLLSLIF), 178–198 (VIIAVLGAVLGMIIAVLGMII), and 199–219 (AALGMIIAALGATITGLLYFG).

This sequence belongs to the UPF0494 family.

Its subcellular location is the membrane. This chain is UPF0494 membrane protein SPAC212.01c, found in Schizosaccharomyces pombe (strain 972 / ATCC 24843) (Fission yeast).